The primary structure comprises 270 residues: Nuclease P1 (270 aa).

The a divalent metal cation site is built by tryptophan 1, histidine 6, histidine 15, aspartate 45, and histidine 60. Residue 1 to 6 coordinates substrate; it reads WGALGH. Residues 45 to 51, 60 to 63, and 73 to 78 contribute to the substrate site; these read DEYRLTS, HFID, and NVDYER. 2 cysteine pairs are disulfide-bonded: cysteine 72-cysteine 217 and cysteine 80-cysteine 85. Residue asparagine 92 is glycosylated (N-linked (GlcNAc...) asparagine). Histidine 116, aspartate 120, and histidine 126 together coordinate a divalent metal cation. The segment at 116-164 is substrate binding; the sequence is HFIGDMTQPLHDEAYAVGGNKINVTFDGYHDNLHSDWDTYMPQKLIGGH. Asparagine 138 carries N-linked (GlcNAc...) asparagine glycosylation. 2 residues coordinate a divalent metal cation: histidine 149 and aspartate 153. Asparagine 184 and asparagine 197 each carry an N-linked (GlcNAc...) asparagine glycan.

This sequence belongs to the nuclease type I family. Zn(2+) serves as cofactor.

The protein localises to the secreted. It catalyses the reaction Endonucleolytic cleavage to 5'-phosphomononucleotide and 5'-phosphooligonucleotide end-products.. Functionally, hydrolyzes only single-stranded DNA and RNA without apparent specificity for bases. The chain is Nuclease P1 from Penicillium citrinum.